Here is a 322-residue protein sequence, read N- to C-terminus: Arginase-1 (322 aa).

At Lys-17 the chain carries N6-succinyllysine. Ser-62 and Ser-72 each carry phosphoserine. An N6-succinyllysine modification is found at Lys-75. Mn(2+) contacts are provided by His-101, Asp-124, His-126, and Asp-128. Residues 126-130 and 137-139 contribute to the substrate site; these read HTDIN and SGN. Ser-163 carries the post-translational modification Phosphoserine. Asp-183 provides a ligand contact to substrate. A Phosphoserine modification is found at Ser-217. Mn(2+)-binding residues include Asp-232 and Asp-234. Substrate is bound by residues Thr-246 and Glu-277.

It belongs to the arginase family. Homotrimer. Interacts with CMTM6. Mn(2+) is required as a cofactor. In terms of tissue distribution, within the immune system initially reported to be selectively expressed in granulocytes (polymorphonuclear leukocytes [PMNs]). Also detected in macrophages mycobacterial granulomas. Expressed in group2 innate lymphoid cells (ILC2s) during lung disease.

Its subcellular location is the cytoplasm. It is found in the cytoplasmic granule. It carries out the reaction L-arginine + H2O = urea + L-ornithine. The protein operates within nitrogen metabolism; urea cycle; L-ornithine and urea from L-arginine: step 1/1. Its function is as follows. Key element of the urea cycle converting L-arginine to urea and L-ornithine, which is further metabolized into metabolites proline and polyamides that drive collagen synthesis and bioenergetic pathways critical for cell proliferation, respectively; the urea cycle takes place primarily in the liver and, to a lesser extent, in the kidneys. Functions in L-arginine homeostasis in nonhepatic tissues characterized by the competition between nitric oxide synthase (NOS) and arginase for the available intracellular substrate arginine. Arginine metabolism is a critical regulator of innate and adaptive immune responses. Involved in an antimicrobial effector pathway in polymorphonuclear granulocytes (PMN). Upon PMN cell death is liberated from the phagolysosome and depletes arginine in the microenvironment leading to suppressed T cell and natural killer (NK) cell proliferation and cytokine secretion. In group 2 innate lymphoid cells (ILC2s) promotes acute type 2 inflammation in the lung and is involved in optimal ILC2 proliferation but not survival. In humans, the immunological role in the monocytic/macrophage/dendritic cell (DC) lineage is unsure. The protein is Arginase-1 (ARG1) of Homo sapiens (Human).